Here is a 558-residue protein sequence, read N- to C-terminus: Rhamnogalacturonase B (558 aa).

The N-terminal stretch at 1 to 21 (MLLDKLSVLSFLGLAPIFAAA) is a signal peptide. A disulfide bridge links C42 with C68. A glycan (N-linked (GlcNAc...) asparagine) is linked at N145. D219 serves as the catalytic Proton donor. A disulfide bridge links C221 with C238. N239 and N254 each carry an N-linked (GlcNAc...) asparagine glycan. Residue H294 is part of the active site. N-linked (GlcNAc...) asparagine glycosylation is present at N321. Disulfide bonds link C344-C350 and C372-C381. The segment covering 503-526 (VGAQEGSTTSAPSFAAPSGAGNSP) has biased composition (low complexity). A disordered region spans residues 503 to 558 (VGAQEGSTTSAPSFAAPSGAGNSPQGPTGASGFGEKGQQGEQGEQGEQGEQGVCYV).

This sequence belongs to the glycosyl hydrolase 28 family.

The protein resides in the secreted. It catalyses the reaction Endohydrolysis of alpha-D-GalA-(1-&gt;2)-alpha-L-Rha glycosidic bond in the rhamnogalacturonan I backbone with initial inversion of anomeric configuration releasing oligosaccharides with beta-D-GalA at the reducing end.. Pectinolytic enzymes consist of four classes of enzymes: pectine lyase, polygalacturonase, pectin methylesterase and rhamnogalacturonase. Hydrolyzes alpha-D-galacturonopyranosyl-(1,2)-alpha-L-rhamnopyranosyl linkages in the backbone of the hairy regions of pectins. This chain is Rhamnogalacturonase B (rhgB), found in Aspergillus niger.